A 381-amino-acid chain; its full sequence is MKTLHFGAGNIGRGFIGKLLADASHQVTFADVNETLIDQLNHRQEYKVHVVGADQKLDVVRNVAAVSSAGHEVIARIITADLVTTAVGPNILDKIASTLAKGLQARFDAGNLSPLNVIACENMVRGTSHLKQEVLKYLPVAYHATHESCVGFVDSAVDRIVPPAAANDDPLEVTVESFSEWIVDQTQFKGELPQVAGMEPTDNLMAFVERKLFTLNTGHIVTAYLGKLRGYRTIREAIEDPVIRSKVRRAMEESGAVLVKRYGFDPRLHAAYIEKILARFANPYLVDEIDRVGRQPLRKLAAGDRLVKPLLGTLEYGLPSDHLQEGIAAALHYCNADDPQAVELQALLAELGPAQALARVTGLAADSDIVSAIVARYDSLK.

3–14 (TLHFGAGNIGRG) contributes to the NAD(+) binding site.

It belongs to the mannitol dehydrogenase family.

It carries out the reaction D-mannitol 1-phosphate + NAD(+) = beta-D-fructose 6-phosphate + NADH + H(+). This chain is Mannitol-1-phosphate 5-dehydrogenase, found in Aeromonas salmonicida (strain A449).